The sequence spans 235 residues: Keratin-associated protein 4-16 (235 aa).

Residues 1–132 (MCSSKMPCSP…CCCPCCCLRP (132 aa)) are 16 X 5 AA repeats of C-C-[GIKRQVHEML]-[SPTRV]-[STVQRCP]. 16 consecutive repeat copies span residues 23–27 (CCHPS), 28–32 (CCQTT), 33–37 (CCRTT), 48–52 (CCRPQ), 53–57 (CCHSV), 58–62 (CCQPT), 63–67 (CCRPS), 68–72 (CCQTT), 78–82 (CCHPS), 83–87 (CCVSS), 88–92 (CCRPQ), 93–97 (CCHSV), 103–107 (CCHPS), 108–112 (CCISS), 118–122 (CCESS), and 128–132 (CCLRP). Over residues 203 to 224 (SPSPSLPSLSPPLPSPPLPSPH) the composition is skewed to pro residues. The segment at 203-235 (SPSPSLPSLSPPLPSPPLPSPHFPSVNPKSMLQ) is disordered.

This sequence belongs to the KRTAP type 4 family. In terms of assembly, interacts with hair keratins.

Functionally, in the hair cortex, hair keratin intermediate filaments are embedded in an interfilamentous matrix, consisting of hair keratin-associated proteins (KRTAP), which are essential for the formation of a rigid and resistant hair shaft through their extensive disulfide bond cross-linking with abundant cysteine residues of hair keratins. The matrix proteins include the high-sulfur and high-glycine-tyrosine keratins. The chain is Keratin-associated protein 4-16 from Homo sapiens (Human).